The chain runs to 532 residues: ATP-dependent RNA helicase DBP3 (532 aa).

Positions 1-78 (MGKRDRTEDD…EVAEEKPKMT (78 aa)) are disordered. Basic residues predominate over residues 15-58 (KKVKLDKKDKKEKKEKKDKKDKKDKKDKKDKKDKKEKKEKKEKK). Residues 126–152 (MEFSHVTLDPRITKVLTKFPRPTPIQA) carry the Q motif motif. The 173-residue stretch at 155-327 (WPYLLAGKDM…EGFMKTPTKV (173 aa)) folds into the Helicase ATP-binding domain. 168–175 (AETGSGKT) lines the ATP pocket. The DEAD box motif lies at 274-277 (DEAD). Residues 356 to 502 (RLLDLLRQYA…PVPDELLKFG (147 aa)) form the Helicase C-terminal domain.

The protein belongs to the DEAD box helicase family. DDX5/DBP2 subfamily.

The protein localises to the nucleus. Its subcellular location is the nucleolus. The catalysed reaction is ATP + H2O = ADP + phosphate + H(+). ATP-dependent RNA helicase required for 60S ribosomal subunit synthesis. Involved in efficient pre-rRNA processing, predominantly at site A3, which is necessary for the normal formation of 25S and 5.8S rRNAs. The protein is ATP-dependent RNA helicase DBP3 (DBP3) of Yarrowia lipolytica (strain CLIB 122 / E 150) (Yeast).